The chain runs to 404 residues: Probable tRNA sulfurtransferase (404 aa).

The region spanning 60–165 is the THUMP domain; it reads HEVAESLKEI…DEAAYISYEN (106 aa). ATP-binding positions include 183 to 184, 208 to 209, R265, G287, and Q296; these read ML and HF.

The protein belongs to the ThiI family.

The protein resides in the cytoplasm. The catalysed reaction is [ThiI sulfur-carrier protein]-S-sulfanyl-L-cysteine + a uridine in tRNA + 2 reduced [2Fe-2S]-[ferredoxin] + ATP + H(+) = [ThiI sulfur-carrier protein]-L-cysteine + a 4-thiouridine in tRNA + 2 oxidized [2Fe-2S]-[ferredoxin] + AMP + diphosphate. It catalyses the reaction [ThiS sulfur-carrier protein]-C-terminal Gly-Gly-AMP + S-sulfanyl-L-cysteinyl-[cysteine desulfurase] + AH2 = [ThiS sulfur-carrier protein]-C-terminal-Gly-aminoethanethioate + L-cysteinyl-[cysteine desulfurase] + A + AMP + 2 H(+). The protein operates within cofactor biosynthesis; thiamine diphosphate biosynthesis. Functionally, catalyzes the ATP-dependent transfer of a sulfur to tRNA to produce 4-thiouridine in position 8 of tRNAs, which functions as a near-UV photosensor. Also catalyzes the transfer of sulfur to the sulfur carrier protein ThiS, forming ThiS-thiocarboxylate. This is a step in the synthesis of thiazole, in the thiamine biosynthesis pathway. The sulfur is donated as persulfide by IscS. This Streptococcus agalactiae serotype III (strain NEM316) protein is Probable tRNA sulfurtransferase.